Consider the following 79-residue polypeptide: Raniseptin-3 (79 aa).

An N-terminal signal peptide occupies residues 1-22 (MAFLKKSLFLVLFLGIVSLSIC). A propeptide spanning residues 23-49 (EEEKREGEEEEKQEEENEELSEEELRE) is cleaved from the precursor.

The protein belongs to the frog skin active peptide (FSAP) family. Dermaseptin subfamily. As to expression, expressed by the skin glands.

Its subcellular location is the secreted. In terms of biological role, has antibacterial activity. In Boana raniceps (Chaco tree frog), this protein is Raniseptin-3.